Reading from the N-terminus, the 247-residue chain is MVIAGVSPPTPSSENLLQEHEEKHFTATDVVRDVIIGVSDGLTVPFALAAGLSGANVPSSLILTAGIAEVAAGAISMGLGGYLAAKSEEDHYMRELKREQEEIINVPDVEAAEIGEILAQYGLEPHVYNPVVNSLRKNPQAWLDFMMKFELGLEKPEPRRALESAMTIALAYVVGGLVPLSPYFFIPFAKQAMITSIAVTLLALVVFGYIKGRFTGSNPVLSSIQTAIIGALASAAAYAMAKAVQSV.

Residues 1-33 (MVIAGVSPPTPSSENLLQEHEEKHFTATDVVRD) are Cytoplasmic-facing. A helical transmembrane segment spans residues 34–54 (VIIGVSDGLTVPFALAAGLSG). Over 55-60 (ANVPSS) the chain is Vacuolar. Residues 61–81 (LILTAGIAEVAAGAISMGLGG) form a helical membrane-spanning segment. At 82 to 167 (YLAAKSEEDH…PRRALESAMT (86 aa)) the chain is on the cytoplasmic side. Fe cation contacts are provided by Glu99, Glu102, Glu110, Glu113, Met146, and Glu150. Residues 168-188 (IALAYVVGGLVPLSPYFFIPF) form a helical membrane-spanning segment. The Vacuolar segment spans residues 189–191 (AKQ). Residues 192–212 (AMITSIAVTLLALVVFGYIKG) form a helical membrane-spanning segment. Residues 213–219 (RFTGSNP) are Cytoplasmic-facing. A helical membrane pass occupies residues 220-240 (VLSSIQTAIIGALASAAAYAM). The Vacuolar portion of the chain corresponds to 241–247 (AKAVQSV).

Belongs to the CCC1 family. In terms of tissue distribution, expressed at high levels in the blue epidermal cells of the inner bottom part of the petal (at protein level). No detectable expression in parenchyma and epidermis of the purple segments of the petal, parenchyma of the blue segments, leaf, stem, bulb and root (at protein level). High levels of mRNA in the blue epidermal cells of the inner bottom part of the petal. Low-levels of mRNA in the purple segments of the petal, stem, leaf, root, bulb and pistil.

The protein resides in the vacuole membrane. It catalyses the reaction Fe(2+)(in) = Fe(2+)(out). Vacuolar iron transporter involved in the transfer of iron ions from the cytosol to the vacuole for intracellular iron storage. Plays an essential role in the development of blue coloration in tulip petals most likely due to the accumulation of ferrous ions that can form complexes with anthocyanins. This is Vacuolar iron transporter 1 from Tulipa gesneriana (Garden tulip).